The sequence spans 409 residues: TNF receptor-associated factor family protein DDB_G0273435/DDB_G0273505 (409 aa).

The RING-type; degenerate zinc finger occupies 20–59 (CQLCCNLMNESVSCPNGHCLCKGCFHKQIETVKSECPICC). 2 consecutive TRAF-type zinc fingers follow at residues 75-145 (KHIN…EIEN) and 145-201 (NHQD…HELS). Residues 221–250 (HQSLLKSTSKQLKQLRSSCEELETKLINND) adopt a coiled-coil conformation. The MATH domain maps to 252–380 (SFNGRWIIKQ…NDQLIIKFNI (129 aa)).

This sequence belongs to the TNF receptor-associated factor family. A subfamily.

It is found in the cytoplasm. Functionally, probable adapter protein and signal transducer that links members of the tumor necrosis factor receptor family to different signaling pathways by association with the receptor cytoplasmic domain and kinases. The chain is TNF receptor-associated factor family protein DDB_G0273435/DDB_G0273505 from Dictyostelium discoideum (Social amoeba).